A 563-amino-acid polypeptide reads, in one-letter code: DEAD-box ATP-dependent RNA helicase 25 (563 aa).

A disordered region spans residues 21–57; sequence KKLTSDEDGSGKLVKDNNKSLKRGREGKSDVDEPLIK. Positions 23 to 56 are enriched in basic and acidic residues; it reads LTSDEDGSGKLVKDNNKSLKRGREGKSDVDEPLI. Ser25 carries the phosphoserine modification. The Q motif motif lies at 80-108; it reads TRFDQFPLSPLTLKGIEDAGFKTMTVVQE. The region spanning 111–294 is the Helicase ATP-binding domain; sequence LPLILQGKDI…HVALKRDHEF (184 aa). Position 124–131 (124–131) interacts with ATP; it reads AKTGTGKT. Positions 242–245 match the DEAD box motif; it reads DEAD. In terms of domain architecture, Helicase C-terminal spans 328–479; it reads LLKKHITDNV…AVKKVQKGLI (152 aa).

Belongs to the DEAD box helicase family.

The catalysed reaction is ATP + H2O = ADP + phosphate + H(+). This Arabidopsis thaliana (Mouse-ear cress) protein is DEAD-box ATP-dependent RNA helicase 25 (RH25).